The following is a 425-amino-acid chain: Histone-binding protein RBBP7 (425 aa).

WD repeat units lie at residues 47-122, 128-173, 181-217, 228-269, 275-312, 318-369, and 376-403; these read QWLP…KINH, RARY…LRLR, GLSW…KVVD, VVED…HSVD, VNCL…LHSF, EIFQ…LFIH, and ISDF…IWQM.

Belongs to the WD repeat RBAP46/RBAP48/MSI1 family. As to quaternary structure, binds directly to helix 1 of the histone fold of histone H4, a region that is not accessible when H4 is in chromatin.

It is found in the nucleus. In terms of biological role, core histone-binding subunit that may target chromatin remodeling factors, histone acetyltransferases and histone deacetylases to their histone substrates in a manner that is regulated by nucleosomal DNA. Component of several complexes which regulate chromatin metabolism. This Xenopus laevis (African clawed frog) protein is Histone-binding protein RBBP7 (rbbp7).